A 115-amino-acid chain; its full sequence is Large ribosomal subunit protein bL19 (115 aa).

It belongs to the bacterial ribosomal protein bL19 family.

Its function is as follows. This protein is located at the 30S-50S ribosomal subunit interface and may play a role in the structure and function of the aminoacyl-tRNA binding site. This chain is Large ribosomal subunit protein bL19, found in Streptococcus equi subsp. zooepidemicus (strain H70).